The sequence spans 208 residues: Uracil phosphoribosyltransferase (208 aa).

Residues Arg78, Arg103, and 130-138 (DPMLATGGS) contribute to the 5-phospho-alpha-D-ribose 1-diphosphate site. Residues Ile193 and 198 to 200 (GDA) each bind uracil. Residue Asp199 coordinates 5-phospho-alpha-D-ribose 1-diphosphate.

This sequence belongs to the UPRTase family. Requires Mg(2+) as cofactor.

It catalyses the reaction UMP + diphosphate = 5-phospho-alpha-D-ribose 1-diphosphate + uracil. Its pathway is pyrimidine metabolism; UMP biosynthesis via salvage pathway; UMP from uracil: step 1/1. Its activity is regulated as follows. Allosterically activated by GTP. Catalyzes the conversion of uracil and 5-phospho-alpha-D-ribose 1-diphosphate (PRPP) to UMP and diphosphate. The protein is Uracil phosphoribosyltransferase of Yersinia enterocolitica serotype O:8 / biotype 1B (strain NCTC 13174 / 8081).